Consider the following 643-residue polypeptide: Hepatoma-derived growth factor-related protein 2 (643 aa).

The PWWP domain maps to 7–64 (PGDLVFAKMKGYPHWPARIDDVKDGAVKPPPNKYPIFFYGTHETAFLAPKDLFPYEKC). Disordered regions lie at residues 88-450 (PQAS…KKPE) and 548-643 (LESQ…NQTS). Over residues 90–104 (ASYSLPPASVSSSDS) the composition is skewed to low complexity. Residues 107–116 (PEEKSTARSD) are compositionally biased toward basic and acidic residues. The segment covering 176–187 (SEEENSDSDQDF) has biased composition (acidic residues). Polar residues predominate over residues 194-204 (PRIQRRTTNLG). Over residues 209–231 (IFAESDSKSDESEDEKKEEEQKK) the composition is skewed to basic and acidic residues. Positions 232 to 249 (SPSSSSASSPSLSSSDSE) are enriched in low complexity. 3 stretches are compositionally biased toward basic and acidic residues: residues 290–353 (SVDR…DSSK), 373–382 (EDKKPVKEVK), and 417–450 (RPSE…KKPE). Residues 295 to 345 (SEWKKRDEERRRELEERRKKEQEEQLRRLREEEREEEERKKREKAEKGDKS) adopt a coiled-coil conformation. The span at 549 to 559 (ESQQKTVQKVN) shows a compositional bias: polar residues. Basic and acidic residues-rich tracts occupy residues 560-575 (TAEK…GKVE) and 608-622 (NKTE…HAEH).

Belongs to the HDGF family.

Its subcellular location is the nucleus. It is found in the cytoplasm. In terms of biological role, may act as a regulator of myogenesis. Promotes the repair of DNA double-strand breaks (DSBs) through the homologous recombination pathway by facilitating the recruitment of the DNA endonuclease RBBP8 to the DSBs. The polypeptide is Hepatoma-derived growth factor-related protein 2 (hdgfl2) (Xenopus tropicalis (Western clawed frog)).